Consider the following 266-residue polypeptide: ATP synthase subunit a (266 aa).

Helical transmembrane passes span 38–58 (KQMLLVILSVVIIATFFILAA), 99–119 (LLFSLFFFILVNNIYGAIPVI), 126–146 (HVGGAYVMAGIVYFTWIIIGI), 162–182 (GVPWYILPIVVPIEIISNFLV), 191–211 (LFATMLAGHLIVMLAGSGIEF), and 224–244 (SVLVLVGAVAMYMLEALIMAL).

This sequence belongs to the ATPase A chain family. In terms of assembly, F-type ATPases have 2 components, CF(1) - the catalytic core - and CF(0) - the membrane proton channel. CF(1) has five subunits: alpha(3), beta(3), gamma(1), delta(1), epsilon(1). CF(0) has three main subunits: a(1), b(2) and c(9-12). The alpha and beta chains form an alternating ring which encloses part of the gamma chain. CF(1) is attached to CF(0) by a central stalk formed by the gamma and epsilon chains, while a peripheral stalk is formed by the delta and b chains.

The protein resides in the cell membrane. In terms of biological role, key component of the proton channel; it plays a direct role in the translocation of protons across the membrane. This Paenarthrobacter aurescens (strain TC1) protein is ATP synthase subunit a.